Here is a 194-residue protein sequence, read N- to C-terminus: MRLCDKDIERYLDEGIISLTPRPSNEKISGATIDVRLGNSFRVFREHSTPYIDLSGPREEMTAQLNRVMSDEILIADDEAFFLHPGELALATTLESVKLPANIVGWLDGRSSLARLGLMVHVTAHRIDPGWEGKIVLEFFNAGKLPLALRPNMAIGALSFEILSGYAEHPYNARKDAKYKNQQSAVFSRIDKDE.

Residues 110–115 (RSSLAR), Asp-128, 136–138 (VLE), Tyr-171, Lys-178, and Gln-182 contribute to the dCTP site. Glu-138 (proton donor/acceptor) is an active-site residue.

The protein belongs to the dCTP deaminase family. In terms of assembly, homotrimer.

It catalyses the reaction dCTP + H2O + H(+) = dUTP + NH4(+). It participates in pyrimidine metabolism; dUMP biosynthesis; dUMP from dCTP (dUTP route): step 1/2. Functionally, catalyzes the deamination of dCTP to dUTP. In Glaesserella parasuis serovar 5 (strain SH0165) (Haemophilus parasuis), this protein is dCTP deaminase.